Reading from the N-terminus, the 391-residue chain is 1-deoxy-D-xylulose 5-phosphate reductoisomerase (391 aa).

An NADPH-binding site is contributed by N109. K110 contributes to the 1-deoxy-D-xylulose 5-phosphate binding site. E111 is a binding site for NADPH. D135 contacts Mn(2+). Positions 136, 137, 171, and 194 each coordinate 1-deoxy-D-xylulose 5-phosphate. Mn(2+) is bound at residue E137. Residue G200 participates in NADPH binding. 1-deoxy-D-xylulose 5-phosphate contacts are provided by S207, N212, R213, and E216. E216 is a binding site for Mn(2+).

This sequence belongs to the DXR family. As to quaternary structure, homodimer. The cofactor is Mg(2+). Requires Mn(2+) as cofactor.

The catalysed reaction is 2-C-methyl-D-erythritol 4-phosphate + NADP(+) = 1-deoxy-D-xylulose 5-phosphate + NADPH + H(+). It functions in the pathway isoprenoid biosynthesis; isopentenyl diphosphate biosynthesis via DXP pathway; isopentenyl diphosphate from 1-deoxy-D-xylulose 5-phosphate: step 1/6. Its function is as follows. Catalyzes the NADPH-dependent rearrangement and reduction of 1-deoxy-D-xylulose-5-phosphate (DXP) to 2-C-methyl-D-erythritol 4-phosphate (MEP). In Blochmanniella floridana, this protein is 1-deoxy-D-xylulose 5-phosphate reductoisomerase.